The primary structure comprises 202 residues: GTP cyclohydrolase 1 (202 aa).

Zn(2+) is bound by residues cysteine 90, histidine 93, and cysteine 163.

The protein belongs to the GTP cyclohydrolase I family. As to quaternary structure, toroid-shaped homodecamer, composed of two pentamers of five dimers.

It catalyses the reaction GTP + H2O = 7,8-dihydroneopterin 3'-triphosphate + formate + H(+). It functions in the pathway cofactor biosynthesis; 7,8-dihydroneopterin triphosphate biosynthesis; 7,8-dihydroneopterin triphosphate from GTP: step 1/1. The protein is GTP cyclohydrolase 1 of Mycolicibacterium vanbaalenii (strain DSM 7251 / JCM 13017 / BCRC 16820 / KCTC 9966 / NRRL B-24157 / PYR-1) (Mycobacterium vanbaalenii).